A 128-amino-acid chain; its full sequence is Flagellar assembly factor FliW 1 (128 aa).

The protein belongs to the FliW family. Interacts with translational regulator CsrA and flagellin(s).

The protein localises to the cytoplasm. Functionally, acts as an anti-CsrA protein, binds CsrA and prevents it from repressing translation of its target genes, one of which is flagellin. Binds to flagellin and participates in the assembly of the flagellum. The sequence is that of Flagellar assembly factor FliW 1 from Wolinella succinogenes (strain ATCC 29543 / DSM 1740 / CCUG 13145 / JCM 31913 / LMG 7466 / NCTC 11488 / FDC 602W) (Vibrio succinogenes).